The following is a 212-amino-acid chain: Dephospho-CoA kinase (212 aa).

One can recognise a DPCK domain in the interval 4–204 (IVALTGGICS…RDYLKAEKTT (201 aa)). 12 to 17 (CSGKSV) is an ATP binding site.

This sequence belongs to the CoaE family.

It localises to the cytoplasm. It carries out the reaction 3'-dephospho-CoA + ATP = ADP + CoA + H(+). It functions in the pathway cofactor biosynthesis; coenzyme A biosynthesis; CoA from (R)-pantothenate: step 5/5. Functionally, catalyzes the phosphorylation of the 3'-hydroxyl group of dephosphocoenzyme A to form coenzyme A. This is Dephospho-CoA kinase from Blochmanniella pennsylvanica (strain BPEN).